The sequence spans 396 residues: DNA polymerase IV (396 aa).

One can recognise a UmuC domain in the interval 2–182 (ILHVDMDAFY…LPVSRLWGVG (181 aa)). Positions 6 and 100 each coordinate Mg(2+). Residue Glu-101 is part of the active site.

This sequence belongs to the DNA polymerase type-Y family. In terms of assembly, monomer. It depends on Mg(2+) as a cofactor.

The protein resides in the cytoplasm. It catalyses the reaction DNA(n) + a 2'-deoxyribonucleoside 5'-triphosphate = DNA(n+1) + diphosphate. In terms of biological role, poorly processive, error-prone DNA polymerase involved in untargeted mutagenesis. Copies undamaged DNA at stalled replication forks, which arise in vivo from mismatched or misaligned primer ends. These misaligned primers can be extended by PolIV. Exhibits no 3'-5' exonuclease (proofreading) activity. May be involved in translesional synthesis, in conjunction with the beta clamp from PolIII. The polypeptide is DNA polymerase IV (Rhodopirellula baltica (strain DSM 10527 / NCIMB 13988 / SH1)).